A 310-amino-acid chain; its full sequence is 4-hydroxy-3-methylbut-2-enyl diphosphate reductase (310 aa).

Residue C13 participates in [4Fe-4S] cluster binding. Residues H42 and H75 each contribute to the (2E)-4-hydroxy-3-methylbut-2-enyl diphosphate site. Dimethylallyl diphosphate-binding residues include H42 and H75. Isopentenyl diphosphate contacts are provided by H42 and H75. A [4Fe-4S] cluster-binding site is contributed by C97. H125 contacts (2E)-4-hydroxy-3-methylbut-2-enyl diphosphate. H125 is a binding site for dimethylallyl diphosphate. Isopentenyl diphosphate is bound at residue H125. The active-site Proton donor is E127. T165 contributes to the (2E)-4-hydroxy-3-methylbut-2-enyl diphosphate binding site. C195 provides a ligand contact to [4Fe-4S] cluster. Residues S223, S224, N225, and S267 each coordinate (2E)-4-hydroxy-3-methylbut-2-enyl diphosphate. Dimethylallyl diphosphate-binding residues include S223, S224, N225, and S267. Isopentenyl diphosphate-binding residues include S223, S224, N225, and S267.

Belongs to the IspH family. It depends on [4Fe-4S] cluster as a cofactor.

It carries out the reaction isopentenyl diphosphate + 2 oxidized [2Fe-2S]-[ferredoxin] + H2O = (2E)-4-hydroxy-3-methylbut-2-enyl diphosphate + 2 reduced [2Fe-2S]-[ferredoxin] + 2 H(+). The catalysed reaction is dimethylallyl diphosphate + 2 oxidized [2Fe-2S]-[ferredoxin] + H2O = (2E)-4-hydroxy-3-methylbut-2-enyl diphosphate + 2 reduced [2Fe-2S]-[ferredoxin] + 2 H(+). The protein operates within isoprenoid biosynthesis; dimethylallyl diphosphate biosynthesis; dimethylallyl diphosphate from (2E)-4-hydroxy-3-methylbutenyl diphosphate: step 1/1. It participates in isoprenoid biosynthesis; isopentenyl diphosphate biosynthesis via DXP pathway; isopentenyl diphosphate from 1-deoxy-D-xylulose 5-phosphate: step 6/6. Catalyzes the conversion of 1-hydroxy-2-methyl-2-(E)-butenyl 4-diphosphate (HMBPP) into a mixture of isopentenyl diphosphate (IPP) and dimethylallyl diphosphate (DMAPP). Acts in the terminal step of the DOXP/MEP pathway for isoprenoid precursor biosynthesis. In Chlamydia pneumoniae (Chlamydophila pneumoniae), this protein is 4-hydroxy-3-methylbut-2-enyl diphosphate reductase.